Here is a 94-residue protein sequence, read N- to C-terminus: FXYD domain-containing ion transport regulator 6 (94 aa).

Residues 1–17 form the signal peptide; it reads METVLVLCSLLAPVVLA. Topologically, residues 18–34 are extracellular; sequence SAAEKEKEKDPFYYDYQ. The helical transmembrane segment at 35 to 57 threads the bilayer; the sequence is TLRIGGLVFAVVLFSVGILLILS. The Cytoplasmic portion of the chain corresponds to 58-94; that stretch reads RRCKCSFNQKPRAPGDEEAQVENLITTNAAEPQKAEN.

This sequence belongs to the FXYD family. Regulatory subunit of the sodium/potassium-transporting ATPase which is composed of a catalytic alpha subunit, a non-catalytic beta subunit and an additional regulatory subunit. The regulatory subunit, a member of the FXYD protein family, modulates the enzymatic activity in a tissue- and isoform-specific way by changing affinities of the Na+/K+-ATPase toward Na(+), K(+) or ATP.

Its subcellular location is the cell membrane. Its function is as follows. Associates with and regulates the activity of the sodium/potassium-transporting ATPase (NKA) which catalyzes the hydrolysis of ATP coupled with the exchange of Na(+) and K(+) ions across the plasma membrane. Reduces the apparent affinity for intracellular Na(+) with no change in the apparent affinity for extracellular K(+). In addition to modulating NKA kinetics, may also function as a regulator of NKA localization to the plasma membrane. The chain is FXYD domain-containing ion transport regulator 6 (Fxyd6) from Mus musculus (Mouse).